The sequence spans 530 residues: Calcium/calmodulin-dependent protein kinase type II alpha chain (530 aa).

The Protein kinase domain maps to 12–272 (DNYDIKEELG…AAEALKHPWI (261 aa)). Residues 20 to 28 (LGKGAFSIV) and K43 each bind ATP. The Proton acceptor role is filled by D136. Residue T287 is modified to Phosphothreonine; by autocatalysis. A calmodulin-binding region spans residues 291 to 301 (LKKFNARRKLK). Phosphothreonine; by autocatalysis is present on residues T306 and T307. The interval 320–358 (ITKKGEGSQVKESTDSSSTTLEDDDIKEDKKGTVDRSTT) is disordered. A Phosphoserine modification is found at S327.

It belongs to the protein kinase superfamily. CAMK Ser/Thr protein kinase family. CaMK subfamily. Interacts with CASK. Autophosphorylation at Thr-287 is independent of autophosphorylation at Thr-306 and Thr-307. Expressed at a high level in the central nervous system during the late embryonic stage. In adults, expression is more abundant in the head than in the body.

It carries out the reaction L-seryl-[protein] + ATP = O-phospho-L-seryl-[protein] + ADP + H(+). The catalysed reaction is L-threonyl-[protein] + ATP = O-phospho-L-threonyl-[protein] + ADP + H(+). CASK plays a role in regulation of CaMKII autophosphorylation. When complexed with CASK and in the presence Ca[2+]/CaM, autophosphorylation of Thr-287 causes constitutive activation of the kinase. In the absence of Ca[2+]/CaM, autophosphorylation of Thr-306 causes inactivation of the kinase. A key regulator of plasticity in synaptic physiology and behavior, alterations in its activity produce pleiotrophic effects that involve synaptic transmission and development as well as various aspects of behavior. Directly modulates eag potassium channels. The chain is Calcium/calmodulin-dependent protein kinase type II alpha chain (CaMKII) from Drosophila melanogaster (Fruit fly).